Consider the following 101-residue polypeptide: Large ribosomal subunit protein uL23 (101 aa).

This sequence belongs to the universal ribosomal protein uL23 family. As to quaternary structure, part of the 50S ribosomal subunit. Contacts protein L29, and trigger factor when it is bound to the ribosome.

Its function is as follows. One of the early assembly proteins it binds 23S rRNA. One of the proteins that surrounds the polypeptide exit tunnel on the outside of the ribosome. Forms the main docking site for trigger factor binding to the ribosome. The polypeptide is Large ribosomal subunit protein uL23 (Azoarcus sp. (strain BH72)).